The primary structure comprises 127 residues: Glycine cleavage system H protein 2 (127 aa).

The 82-residue stretch at 24–105 (SVTVGISDHA…PYGSWIFKLK (82 aa)) folds into the Lipoyl-binding domain. Position 65 is an N6-lipoyllysine (Lys65).

The protein belongs to the GcvH family. In terms of assembly, the glycine cleavage system is composed of four proteins: P, T, L and H. (R)-lipoate serves as cofactor.

In terms of biological role, the glycine cleavage system catalyzes the degradation of glycine. The H protein shuttles the methylamine group of glycine from the P protein to the T protein. This is Glycine cleavage system H protein 2 from Pseudomonas putida (strain ATCC 47054 / DSM 6125 / CFBP 8728 / NCIMB 11950 / KT2440).